The sequence spans 305 residues: N-acetylglucosamine-1-phosphotransferase subunit gamma (305 aa).

The N-terminal stretch at 1-24 is a signal peptide; sequence MAAGLARLLLLLGLSAGGPAPAGA. The MRH domain occupies 69 to 171; sequence GKCFSLVEST…TFETPLVCHP (103 aa). C71 and C84 form a disulfide bridge. 2 N-linked (GlcNAc...) asparagine glycosylation sites follow: N88 and N115. Disulfide bonds link C129-C157 and C142-C169. The region spanning 176–279 is the DMAP1-binding domain; the sequence is VYPTLPEALQ…YTRPTETSNL (104 aa). The interval 267–305 is disordered; it reads GIPYTRPTETSNLEHLGHETPRAKSPEQLRGDPGLRGSL. Over residues 281–296 the composition is skewed to basic and acidic residues; that stretch reads HLGHETPRAKSPEQLR.

Homodimer; disulfide-linked. Hexamer of two alpha (GNPTAB), two beta (GNPTAB) and two gamma (GNPTG) subunits; disulfide-linked. The alpha and/or the beta subunits of the enzyme constitute the catalytic subunits. Post-translationally, cys-245 mediates the formation of the interchain disulfide bond for formation of the homodimer. Cys-142, Cys-157 and Cys-169 are involved in intramolecular disulfide bonds formation. Widely expressed.

It localises to the secreted. Its subcellular location is the golgi apparatus. In terms of biological role, non-catalytic subunit of the N-acetylglucosamine-1-phosphotransferase complex, an enzyme that catalyzes the formation of mannose 6-phosphate (M6P) markers on high mannose type oligosaccharides in the Golgi apparatus. Binds and presents the high mannose glycans of the acceptor to the catalytic alpha and beta subunits (GNPTAB). Enhances the rate of N-acetylglucosamine-1-phosphate transfer to the oligosaccharides of acid hydrolase acceptors. The chain is N-acetylglucosamine-1-phosphotransferase subunit gamma (GNPTG) from Homo sapiens (Human).